The primary structure comprises 105 residues: Ferredoxin (105 aa).

Cysteine 8 and cysteine 16 together coordinate [3Fe-4S] cluster. [4Fe-4S] cluster contacts are provided by cysteine 20, cysteine 39, cysteine 42, and cysteine 45. Positions arginine 30–aspartate 59 constitute a 4Fe-4S ferredoxin-type domain. Cysteine 49 lines the [3Fe-4S] cluster pocket.

[4Fe-4S] cluster serves as cofactor. The cofactor is [3Fe-4S] cluster.

In terms of biological role, ferredoxins are iron-sulfur proteins that transfer electrons in a wide variety of metabolic reactions. Putative electron transport protein for the cytochrome P-450SOY system from the same organism. This Streptomyces griseus protein is Ferredoxin.